The sequence spans 79 residues: Centromere protein X (79 aa).

M1 is subject to N-acetylmethionine.

This sequence belongs to the CENP-X/MHF2 family. Heterodimer with CENPX, sometimes called MHF; this interaction stabilizes both partners. MHF heterodimers can assemble to form tetrameric structures. MHF also coassemble with CENPT-CENPW heterodimers at centromeres to form the tetrameric CENP-T-W-S-X complex. Forms a discrete complex with FANCM and CENPX, called FANCM-MHF; this interaction, probably mediated by direct binding between CENPS and FANCM, leads to synergistic activation of double-stranded DNA binding and strongly stimulates FANCM-mediated DNA remodeling. Recruited by FANCM to the Fanconi anemia (FA) core complex, which consists of CENPS, CENPX, FANCA, FANCB, FANCC, FANCE, FANCF, FANCG, FANCL, FANCM, FAAP24 and FAAP100. The FA core complex associates with Bloom syndrome (BLM) complex, which consists of at least BLM, DNA topoisomerase 3-alpha (TOP3A), RMI1/BLAP75, RPA1/RPA70 and RPA2/RPA32. The super complex between FA and BLM is called BRAFT.

The protein resides in the nucleus. It is found in the chromosome. It localises to the centromere. Its subcellular location is the kinetochore. Its function is as follows. DNA-binding component of the Fanconi anemia (FA) core complex. Required for the normal activation of the FA pathway, leading to monoubiquitination of the FANCI-FANCD2 complex in response to DNA damage, cellular resistance to DNA cross-linking drugs, and prevention of chromosomal breakage. In complex with CENPS (MHF heterodimer), crucial cofactor for FANCM in both binding and ATP-dependent remodeling of DNA. Stabilizes FANCM. In complex with CENPS and FANCM (but not other FANC proteins), rapidly recruited to blocked forks and promotes gene conversion at blocked replication forks. In complex with CENPS, CENPT and CENPW (CENP-T-W-S-X heterotetramer), involved in the formation of a functional kinetochore outer plate, which is essential for kinetochore-microtubule attachment and faithful mitotic progression. As a component of MHF and CENP-T-W-S-X complexes, binds DNA and bends it to form a nucleosome-like structure. DNA-binding function is fulfilled in the presence of CENPS, with the following preference for DNA substates: Holliday junction &gt; double-stranded &gt; splay arm &gt; single-stranded. Does not bind DNA on its own. This chain is Centromere protein X (CENPX), found in Bos taurus (Bovine).